We begin with the raw amino-acid sequence, 307 residues long: Fructokinase (307 aa).

It belongs to the carbohydrate kinase PfkB family.

It carries out the reaction D-fructose + ATP = D-fructose 6-phosphate + ADP + H(+). Involved in sucrose metabolism. The chain is Fructokinase (scrK) from Klebsiella pneumoniae.